Here is a 452-residue protein sequence, read N- to C-terminus: CCA-adding enzyme (452 aa).

ATP contacts are provided by Ser54 and Arg57. CTP-binding residues include Ser54 and Arg57. 3 residues coordinate Mg(2+): Asp66, Asp68, and Asp117. Positions 140, 160, and 169 each coordinate ATP. His140, Lys160, and Tyr169 together coordinate CTP.

It belongs to the tRNA nucleotidyltransferase/poly(A) polymerase family. Archaeal CCA-adding enzyme subfamily. As to quaternary structure, homodimer. Mg(2+) serves as cofactor.

The enzyme catalyses a tRNA precursor + 2 CTP + ATP = a tRNA with a 3' CCA end + 3 diphosphate. It carries out the reaction a tRNA with a 3' CCA end + 2 CTP + ATP = a tRNA with a 3' CCACCA end + 3 diphosphate. Its function is as follows. Catalyzes the addition and repair of the essential 3'-terminal CCA sequence in tRNAs without using a nucleic acid template. Adds these three nucleotides in the order of C, C, and A to the tRNA nucleotide-73, using CTP and ATP as substrates and producing inorganic pyrophosphate. tRNA 3'-terminal CCA addition is required both for tRNA processing and repair. Also involved in tRNA surveillance by mediating tandem CCA addition to generate a CCACCA at the 3' terminus of unstable tRNAs. While stable tRNAs receive only 3'-terminal CCA, unstable tRNAs are marked with CCACCA and rapidly degraded. The polypeptide is CCA-adding enzyme (Halobacterium salinarum (strain ATCC 29341 / DSM 671 / R1)).